A 78-amino-acid polypeptide reads, in one-letter code: Translational regulator CsrA (78 aa).

This sequence belongs to the CsrA/RsmA family. Homodimer; the beta-strands of each monomer intercalate to form a hydrophobic core, while the alpha-helices form wings that extend away from the core.

The protein localises to the cytoplasm. Functionally, a translational regulator that binds mRNA to regulate translation initiation and/or mRNA stability. Usually binds in the 5'-UTR at or near the Shine-Dalgarno sequence preventing ribosome-binding, thus repressing translation. Its main target seems to be the major flagellin gene, while its function is anatagonized by FliW. This chain is Translational regulator CsrA, found in Caldicellulosiruptor bescii (strain ATCC BAA-1888 / DSM 6725 / KCTC 15123 / Z-1320) (Anaerocellum thermophilum).